The following is a 292-amino-acid chain: Coatomer subunit epsilon-1 (292 aa).

Belongs to the COPE family. In terms of assembly, oligomeric complex that consists of at least the alpha, beta, beta', gamma, delta, epsilon and zeta subunits.

It is found in the cytoplasm. The protein localises to the golgi apparatus membrane. The protein resides in the cytoplasmic vesicle. It localises to the COPI-coated vesicle membrane. In terms of biological role, the coatomer is a cytosolic protein complex that binds to dilysine motifs and reversibly associates with Golgi non-clathrin-coated vesicles, which further mediate biosynthetic protein transport from the ER, via the Golgi up to the trans Golgi network. The coatomer complex is required for budding from Golgi membranes, and is essential for the retrograde Golgi-to-ER transport of dilysine-tagged proteins. In Arabidopsis thaliana (Mouse-ear cress), this protein is Coatomer subunit epsilon-1.